Here is a 110-residue protein sequence, read N- to C-terminus: Small ribosomal subunit protein mS33 (110 aa).

Basic residues predominate over residues 84 to 95 (KRRGKGAPKKMK). The interval 84–110 (KRRGKGAPKKMKKDAAATAKGKGKKKK) is disordered.

It belongs to the mitochondrion-specific ribosomal protein mS33 family. Component of the mitochondrial small ribosomal subunit (mt-SSU). Mature yeast 74S mitochondrial ribosomes consist of a small (37S) and a large (54S) subunit. The 37S small subunit contains a 15S ribosomal RNA (15S mt-rRNA) and 34 different proteins. The 54S large subunit contains a 21S rRNA (21S mt-rRNA) and 46 different proteins.

The protein localises to the mitochondrion. In terms of biological role, component of the mitochondrial ribosome (mitoribosome), a dedicated translation machinery responsible for the synthesis of mitochondrial genome-encoded proteins, including at least some of the essential transmembrane subunits of the mitochondrial respiratory chain. The mitoribosomes are attached to the mitochondrial inner membrane and translation products are cotranslationally integrated into the membrane. In Saccharomyces cerevisiae (strain ATCC 204508 / S288c) (Baker's yeast), this protein is Small ribosomal subunit protein mS33 (RSM27).